A 499-amino-acid polypeptide reads, in one-letter code: Pleckstrin homology domain-containing family O member 2 (499 aa).

Residues 1-11 (MEEEGVKEGGQ) show a composition bias toward basic and acidic residues. The tract at residues 1-21 (MEEEGVKEGGQRPRSAQTADK) is disordered. The 102-residue stretch at 18–119 (TADKAGWIKK…WIKALNEGIN (102 aa)) folds into the PH domain. Serine 167 bears the Phosphoserine mark. The interval 170 to 419 (LSRLDLDVPD…RRRQPGEQLH (250 aa)) is disordered. Positions 201–212 (RPPMPPAKPSPA) are enriched in pro residues. The span at 229 to 238 (SAPAPVPASS) shows a compositional bias: low complexity. A phosphoserine mark is found at serine 237 and serine 238. Residues 246 to 258 (EDLETPVVEDSDS) show a composition bias toward acidic residues. Phosphoserine is present on serine 273. Phosphothreonine is present on residues threonine 298 and threonine 311. 2 stretches are compositionally biased toward low complexity: residues 329 to 349 (EASG…GPAE) and 367 to 386 (AAGP…TLPP). Serine 399 carries the post-translational modification Phosphoserine. A coiled-coil region spans residues 416–492 (EQLHRAQLEV…LREKRRELVT (77 aa)).

In Bos taurus (Bovine), this protein is Pleckstrin homology domain-containing family O member 2 (PLEKHO2).